Consider the following 232-residue polypeptide: Aliphatic sulfonates import ATP-binding protein SsuB 2 (232 aa).

Residues 1 to 216 (MDIRVDRKAF…PRDRRDPLLA (216 aa)) enclose the ABC transporter domain. 33–40 (GPSGCGKS) provides a ligand contact to ATP.

This sequence belongs to the ABC transporter superfamily. Aliphatic sulfonates importer (TC 3.A.1.17.2) family. The complex is composed of two ATP-binding proteins (SsuB), two transmembrane proteins (SsuC) and a solute-binding protein (SsuA).

The protein resides in the cell inner membrane. The enzyme catalyses ATP + H2O + aliphatic sulfonate-[sulfonate-binding protein]Side 1 = ADP + phosphate + aliphatic sulfonateSide 2 + [sulfonate-binding protein]Side 1.. Part of the ABC transporter complex SsuABC involved in aliphatic sulfonates import. Responsible for energy coupling to the transport system. The protein is Aliphatic sulfonates import ATP-binding protein SsuB 2 of Pseudomonas syringae pv. tomato (strain ATCC BAA-871 / DC3000).